The following is a 229-amino-acid chain: All-trans retinoic acid-induced differentiation factor (229 aa).

The N-terminal stretch at 1-30 (MAPHDPGSLTTLVPWAAALLLALGVERALA) is a signal peptide. Residues 31 to 199 (LPEICTQCPG…YKCMRQGSFS (169 aa)) are Extracellular-facing. N-linked (GlcNAc...) asparagine glycans are attached at residues asparagine 44, asparagine 79, asparagine 157, and asparagine 168. Positions 152–193 (QKNLCNNTGDPEMCPENGSCVPDGPGLLQCVCADGFHGYKCM) constitute an EGF-like domain. Disulfide bonds link cysteine 156-cysteine 171, cysteine 165-cysteine 181, and cysteine 183-cysteine 192. The helical transmembrane segment at 200 to 220 (LLMFFGILGATTLSVSILLWA) threads the bilayer. At 221 to 229 (TQRRKAKTS) the chain is on the cytoplasmic side.

In terms of assembly, interacts with NELL1; the interaction promotes osteoblastic differentiation and mineralization. Interacts with SLC37A3; the interaction is direct and both proteins are mutually dependent for their stability. Weakly expressed in hematopoietic cell lines.

It localises to the nucleus envelope. The protein resides in the cell membrane. It is found in the lysosome membrane. In terms of biological role, promotes osteoblast cell differentiation and terminal mineralization. Plays a role in inducing the cell cycle arrest via inhibiting CCND1 expression in all-trans-retinoic acid (ATRA) signal pathway. In osteoclasts, forms a transporter complex with ATRAID for nitrogen-containing-bisphophonates (N-BPs) required for releasing N-BP molecules that have trafficked to lysosomes through fluid-phase endocytosis into the cytosol. In Homo sapiens (Human), this protein is All-trans retinoic acid-induced differentiation factor.